We begin with the raw amino-acid sequence, 996 residues long: NACHT, LRR and PYD domains-containing protein 9 (996 aa).

Residues Met1–Gln94 form the Pyrin domain. The region spanning Pro150–Pro469 is the NACHT domain. Gly156–Thr163 lines the ATP pocket. LRR repeat units lie at residues Lys748–Glu769, Ala777–Gln798, Ser805–Cys825, Asn834–Thr855, Lys862–Lys883, and Lys891–Leu914.

The protein belongs to the NLRP family. In terms of assembly, sensor component of NLRP9 inflammasomes. Inflammasomes are supramolecular complexes that assemble in the cytosol in response to pathogens, such as rotavirus, and play critical roles in innate immunity and inflammation. The core of NLRP9 inflammasomes consists of a signal sensor component (NLRP9), an adapter (ASC/PYCARD), which recruits an effector pro-inflammatory caspase (CASP1). Within the complex, NLRP9 and PYCARD interact via their respective DAPIN/pyrin domains. This interaction initiates speck formation (nucleation) which greatly enhances further addition of soluble PYCARD molecules to the speck in a prion-like polymerization process. Clustered PYCARD nucleates the formation of CASP1 filaments through the interaction of their respective CARD domains, acting as a platform for CASP1 polymerization. CASP1 filament formation increases local enzyme concentration, resulting in trans-autocleavage and activation. Active CASP1 then processes IL1B and IL18 precursors, leading to the release of mature cytokines in the extracellular milieu and inflammatory response. Interacts with DHX9 upon rotavirus infection; this interaction may trigger inflammasome activation and inflammatory response. In terms of tissue distribution, detected exclusively in testis and ovary, and at high level in the oocyte from antral follicles.

It localises to the cytoplasm. It is found in the inflammasome. Its function is as follows. As the sensor component of the NLRP9 inflammasome, plays a crucial role in innate immunity and inflammation. In response to pathogens, including rotavirus, initiates the formation of the inflammasome polymeric complex, made of NLRP9, PYCARD and CASP1. Recruitment of proCASP1 to the inflammasome promotes its activation and CASP1-catalyzed IL1B and IL18 maturation and release in the extracellular milieu. The active cytokines stimulate inflammatory responses. Inflammasomes can also induce pyroptosis, an inflammatory form of programmed cell death. NLRP9 inflammasome activation may be initiated by DHX9 interaction with viral double-stranded RNA (dsRNA), preferentially to short dsRNA segments. The chain is NACHT, LRR and PYD domains-containing protein 9 (NLRP9) from Bos taurus (Bovine).